Here is a 112-residue protein sequence, read N- to C-terminus: Outer membrane protein assembly factor BamE (112 aa).

The first 19 residues, 1 to 19 (MRCKTLTAAAAVLLMLTAG), serve as a signal peptide directing secretion. Cys20 is lipidated: N-palmitoyl cysteine. The S-diacylglycerol cysteine moiety is linked to residue Cys20.

It belongs to the BamE family. Part of the Bam complex, which is composed of the outer membrane protein BamA, and four lipoproteins BamB, BamC, BamD and BamE.

Its subcellular location is the cell outer membrane. Its function is as follows. Part of the outer membrane protein assembly complex, which is involved in assembly and insertion of beta-barrel proteins into the outer membrane. This is Outer membrane protein assembly factor BamE from Salmonella typhimurium (strain LT2 / SGSC1412 / ATCC 700720).